The sequence spans 1118 residues: Phytochrome 1 (1118 aa).

A compositionally biased stretch (low complexity) spans 1–10; that stretch reads MSSTRHSYSS. The segment at 1–23 is disordered; the sequence is MSSTRHSYSSGGSGKSKHGRRIA. Residues 212–391 enclose the GAF domain; that stretch reads DIGLLCDSVV…VFSLQLNMEV (180 aa). C317 is a phytochromobilin binding site. PAS domains lie at 606-677 and 740-811; these read VASE…LEGE and DYKA…TKLM. The 224-residue stretch at 887 to 1110 folds into the Histidine kinase domain; the sequence is YVKEELKKPL…LVTIQFPLAH (224 aa).

It belongs to the phytochrome family. In terms of assembly, homodimer. In terms of processing, contains one covalently linked phytochromobilin chromophore.

In terms of biological role, regulatory photoreceptor which exists in two forms that are reversibly interconvertible by light: the Pr form that absorbs maximally in the red region of the spectrum and the Pfr form that absorbs maximally in the far-red region. Photoconversion of Pr to Pfr induces an array of morphogenic responses, whereas reconversion of Pfr to Pr cancels the induction of those responses. Pfr controls the expression of a number of nuclear genes including those encoding the small subunit of ribulose-bisphosphate carboxylase, chlorophyll A/B binding protein, protochlorophyllide reductase, rRNA, etc. It also controls the expression of its own gene(s) in a negative feedback fashion. This is Phytochrome 1 (PHY1) from Adiantum capillus-veneris (Maidenhair fern).